The primary structure comprises 345 residues: Membrane progestin receptor gamma-A (345 aa).

Over 1 to 52 the chain is Cytoplasmic; that stretch reads MLNLIKLPQVFTINQVPKVFHEDGIISGYRHPCSSAKDCVLSLFQLTNETLN. The helical transmembrane segment at 53–73 threads the bilayer; it reads IWTHFLPTWFFLWKLLTVVLV. Residues 74–80 are Extracellular-facing; it reads LEDWRDP. A helical membrane pass occupies residues 81-101; the sequence is FIWPFLVFLLSCCVYPLASSC. The Cytoplasmic portion of the chain corresponds to 102 to 114; it reads AHTFSTMSERARH. Residues 115–135 traverse the membrane as a helical segment; the sequence is ICFFFDYGALSFYSLGSAIIY. The Extracellular segment spans residues 136-148; it reads SSYSFPDKWVNGT. A helical transmembrane segment spans residues 149–169; that stretch reads FHLNYVSIAVVNSIISTALAC. Over 170 to 201 the chain is Cytoplasmic; the sequence is YSRLGLPFLEYNCHSIKRPSGKLDQKLCKCLR. Residues 202–222 form a helical membrane-spanning segment; it reads IIAFVYPYLFDNIPLFYRIFV. The Extracellular portion of the chain corresponds to 223–272; that stretch reads CAGEGCTVNEANTVHYQHTSLAFFTGFLFATHLPERLAPGSFDYIGHSHQ. A helical transmembrane segment spans residues 273–293; sequence LFHVFAIIGTYFQMTAIELDM. Topologically, residues 294–314 are cytoplasmic; sequence AARKQWLHAHLPPVTFLNTVG. A helical membrane pass occupies residues 315-335; that stretch reads AAFFSVVSGLCIVYVFSLSLF. Over 336–345 the chain is Extracellular; that stretch reads STRGVKNKSF.

Belongs to the ADIPOR family.

The protein localises to the membrane. Its function is as follows. Steroid membrane receptor. Binds progesterone. May be involved in oocyte maturation. This chain is Membrane progestin receptor gamma-A (paqr5a), found in Danio rerio (Zebrafish).